Consider the following 283-residue polypeptide: 2-hydroxymuconate semialdehyde hydrolase (283 aa).

An AB hydrolase-1 domain is found at 32 to 262 (LMMIHGSGPG…QCGHWTQIEH (231 aa)). Active-site residues include S107, D228, and H256.

This sequence belongs to the DmpD/TodF/XylF esterase family.

It carries out the reaction (2Z,4E)-2-hydroxy-6-oxohexa-2,4-dienoate + H2O = 2-oxopent-4-enoate + formate + H(+). The protein operates within aromatic compound metabolism; benzoate degradation via hydroxylation. Catalyzes the conversion of 2-hydroxymuconate semialdehyde to 2-hydroxypent-2,4-dienoate. This Pseudomonas sp. (strain CF600) protein is 2-hydroxymuconate semialdehyde hydrolase (dmpD).